Here is a 454-residue protein sequence, read N- to C-terminus: Butyrophilin-like protein 2 (454 aa).

Over 1 to 6 (MVDCPR) the chain is Cytoplasmic. A helical; Signal-anchor for type II membrane protein membrane pass occupies residues 7–23 (YSLSGVAASFLFVLLTI). At 24–454 (KHPDDFRVVG…KTARFPLSGW (431 aa)) the chain is on the extracellular side. 4 consecutive Ig-like V-type domains span residues 27–140 (DDFR…VLLQ), 148–234 (PNIH…ATIA), 244–355 (ASVS…ARVD), and 365–452 (PRIT…FPLS). 4 cysteine pairs are disulfide-bonded: Cys-50-Cys-124, Cys-164-Cys-218, Cys-267-Cys-341, and Cys-381-Cys-435. Asn-210, Asn-296, Asn-427, and Asn-432 each carry an N-linked (GlcNAc...) asparagine glycan.

It belongs to the immunoglobulin superfamily. BTN/MOG family. As to expression, highly expressed in intestine and at reduced levels in lung and stomach. Also expressed in thymus, spleen, lymph nodes, T-cells, B-cells, and macrophages.

It localises to the membrane. Functionally, negative regulator of T-cell proliferation. The sequence is that of Butyrophilin-like protein 2 from Mus musculus (Mouse).